Consider the following 870-residue polypeptide: Leucine--tRNA ligase (870 aa).

Residues 42–52 (PYPSGKLHMGH) carry the 'HIGH' region motif. Residues 629–633 (KMSKS) carry the 'KMSKS' region motif. K632 lines the ATP pocket.

This sequence belongs to the class-I aminoacyl-tRNA synthetase family.

The protein localises to the cytoplasm. The catalysed reaction is tRNA(Leu) + L-leucine + ATP = L-leucyl-tRNA(Leu) + AMP + diphosphate. The sequence is that of Leucine--tRNA ligase from Dechloromonas aromatica (strain RCB).